The sequence spans 178 residues: Small ribosomal subunit protein uS5 (178 aa).

One can recognise an S5 DRBM domain in the interval 13–76 (LEERVVQINR…EAAKRNLIRV (64 aa)). The segment at 156–178 (ASRRDMTPQELMERRTRRETEAA) is disordered.

It belongs to the universal ribosomal protein uS5 family. As to quaternary structure, part of the 30S ribosomal subunit. Contacts proteins S4 and S8.

In terms of biological role, with S4 and S12 plays an important role in translational accuracy. Its function is as follows. Located at the back of the 30S subunit body where it stabilizes the conformation of the head with respect to the body. This Chloroflexus aurantiacus (strain ATCC 29364 / DSM 637 / Y-400-fl) protein is Small ribosomal subunit protein uS5.